Consider the following 209-residue polypeptide: Heat shock protein beta-1 (209 aa).

Omega-N-methylarginine is present on arginine 12. Residue serine 13 is modified to Phosphoserine. Serine 15 carries the post-translational modification Phosphoserine; by MAPKAPK2 and MAPKAPK3. The residue at position 27 (serine 27) is a Phosphoserine. The interaction with TGFB1I1 stretch occupies residues alanine 74–lysine 209. Residues alanine 80–threonine 188 form the sHSP domain. Serine 82 and serine 86 each carry phosphoserine; by MAPKAPK2, MAPKAPK3 and MAPKAPK5. 3 positions are modified to phosphoserine: serine 87, serine 90, and serine 102. Residue lysine 127 is modified to N6-acetyllysine. Position 178 is a phosphothreonine (threonine 178). A phosphoserine mark is found at serine 180 and serine 203.

This sequence belongs to the small heat shock protein (HSP20) family. In terms of assembly, homooligomer. Homodimer; becomes monomeric upon activation. Heterooligomer; with HSPB6. Associates with alpha- and beta-tubulin. Interacts with TGFB1I1. Interacts with CRYAB. Interacts with HSPB8. Interacts with HSPBAP1. Post-translationally, phosphorylated upon exposure to protein kinase C activators and heat shock. Phosphorylation by MAPKAPK2 and MAPKAPK3 in response to stress dissociates HSPB1 from large small heat-shock protein (sHsps) oligomers and impairs its chaperone activity and ability to protect against oxidative stress effectively. Phosphorylation by MAPKAPK5 in response to PKA stimulation induces F-actin rearrangement.

It localises to the cytoplasm. The protein resides in the nucleus. It is found in the cytoskeleton. Its subcellular location is the spindle. Functionally, small heat shock protein which functions as a molecular chaperone probably maintaining denatured proteins in a folding-competent state. Plays a role in stress resistance and actin organization. Through its molecular chaperone activity may regulate numerous biological processes including the phosphorylation and the axonal transport of neurofilament proteins. This chain is Heat shock protein beta-1 (HSPB1), found in Canis lupus familiaris (Dog).